Reading from the N-terminus, the 487-residue chain is UDP-glucose flavonoid 3-O-glucosyltransferase 7 (487 aa).

Histidine 23 acts as the Proton acceptor in catalysis. An an anthocyanidin-binding site is contributed by histidine 23. Aspartate 121 acts as the Charge relay in catalysis. The UDP-alpha-D-glucose site is built by alanine 345, glutamine 347, histidine 362, tryptophan 365, asparagine 366, serine 367, and glutamate 370. Glycine 385 contacts an anthocyanidin. Glutamate 386 and glutamine 387 together coordinate UDP-alpha-D-glucose.

Belongs to the UDP-glycosyltransferase family. As to expression, strongly expressed in achenes and receptacles.

The catalysed reaction is a flavonol + UDP-alpha-D-glucose = a flavonol 3-O-beta-D-glucoside + UDP + H(+). Its function is as follows. Broad spectrum multifunctional glucosyltransferase. Catalyzes the formation of flavonol 3-O- and 4'-O-glucosides during fruit ripening. Accepted substrates include several flavonoids, hydroxycoumarins and beta-naphthols. Uses UDP-Glc as a sugar donor, but not UDP-Gal or UDP-GlcUA. May also be involved in detoxification of xenobiotics. The polypeptide is UDP-glucose flavonoid 3-O-glucosyltransferase 7 (Fragaria ananassa (Strawberry)).